A 210-amino-acid chain; its full sequence is MNITIVDHPLVQHKLGLLREADTSTMKFRQLTQELARLLAYEATRDFELESVTIDGWCGKIDVKQIKGKKVTVVPILRAGIGMLDGVLDLVPSAKISVVGLARNEETLEPVSYFEKFVGNLDERIAIIIDPMLATGGSLVATIDLLKRNGCKHIKAVVMVAAPEGVKIVNDAHPDVQIYAASLDSHLNEHGYIIPGLGDAGDKIFGTKQA.

5-phospho-alpha-D-ribose 1-diphosphate contacts are provided by residues R78, R103, and 130 to 138; that span reads DPMLATGGS. Residues I193 and 198–200 each bind uracil; that span reads GDA. D199 is a binding site for 5-phospho-alpha-D-ribose 1-diphosphate.

This sequence belongs to the UPRTase family. Mg(2+) serves as cofactor.

It catalyses the reaction UMP + diphosphate = 5-phospho-alpha-D-ribose 1-diphosphate + uracil. It participates in pyrimidine metabolism; UMP biosynthesis via salvage pathway; UMP from uracil: step 1/1. With respect to regulation, allosterically activated by GTP. Its function is as follows. Catalyzes the conversion of uracil and 5-phospho-alpha-D-ribose 1-diphosphate (PRPP) to UMP and diphosphate. In Chromobacterium violaceum (strain ATCC 12472 / DSM 30191 / JCM 1249 / CCUG 213 / NBRC 12614 / NCIMB 9131 / NCTC 9757 / MK), this protein is Uracil phosphoribosyltransferase.